Here is a 423-residue protein sequence, read N- to C-terminus: Guanine nucleotide-binding protein subunit beta (423 aa).

WD repeat units follow at residues 90-120 (GHNNKISDFRWSRDSKRILSASQDGFMLIWD), 132-162 (LDSQWVLSCAISPSSTLVASAGLNNNCTIYR), 179-208 (GHTCYISDIEFTDNAHILTASGDMTCALWD), 220-256 (DHLGDVLALAIPEEPNSENSSNTFASCGSDGYTYIWD), 268-298 (VNDSDINALRFFKDGMSIVAGSDNGAINMYD), 348-377 (DNQGVVSLDFSASGRLMYSCYTDIGCVVWD), and 389-419 (GHGGRVTGVRSSPDGLAVCTGSWDSTMKIWS).

This sequence belongs to the WD repeat G protein beta family. As to quaternary structure, g proteins are composed of 3 units, alpha, beta and gamma. The beta-gamma subunit complex (STE4-STE18 complex) interacts with PLP1 and PLP2. Interacts with SYG1.

Implicated in the a- and alpha-factor response pathway. The beta and gamma chains of the putative yeast mating response pathway G protein play a positive role in initiation of the mating response. The beta and gamma chains are required for the GTPase activity, for replacement of GDP by GTP, and for G protein-effector interaction. This is Guanine nucleotide-binding protein subunit beta (STE4) from Saccharomyces cerevisiae (strain ATCC 204508 / S288c) (Baker's yeast).